Consider the following 942-residue polypeptide: Protein FAM184B (942 aa).

2 disordered regions span residues 1 to 26 and 73 to 97; these read MASALNSKIHPPGTCASSKADARGGS and QEDLQDTGAETRTRLPQEQSRTSED. Coiled coils occupy residues 89 to 150, 196 to 337, and 387 to 495; these read QEQS…RVLI, EMHQ…DRLM, and SETQ…SLLE. Residues 486–542 form a disordered region; that stretch reads STKLQNSLLEDPCSRPKKPARDEGLEKLTDEEESSSDEEERTGESVKGKSDLQPPFE. A compositionally biased stretch (basic and acidic residues) spans 504-513; it reads PARDEGLEKL. Residues 514–526 are compositionally biased toward acidic residues; that stretch reads TDEEESSSDEEER. 2 coiled-coil regions span residues 575–619 and 686–815; these read NKDS…ESLR and EKGL…ERRF. The disordered stretch occupies residues 880–934; it reads APPITKSPSLDPSPSCSQPYKPTQLLDGKTASRTQDGEPAQPKEAPQKQGSPHQE. The segment covering 885–900 has biased composition (polar residues); it reads KSPSLDPSPSCSQPYK.

The protein belongs to the FAM184 family.

The protein is Protein FAM184B (Fam184b) of Mus musculus (Mouse).